A 433-amino-acid chain; its full sequence is 23S rRNA (uracil(1939)-C(5))-methyltransferase RlmD (433 aa).

The TRAM domain maps to 10–68 (RTTTRQIITVSVNDLDSFGQGVARHNGKTLFIPGLLPQENAEVTVTEDKKQYARAKVVR). Interaction with RNA regions lie at residues 23–40 (DLDS…KTLF) and 58–63 (KKQYAR). The [4Fe-4S] cluster site is built by Cys-81, Cys-87, Cys-90, and Cys-162. S-adenosyl-L-methionine-binding residues include Gln-265, Phe-294, Asn-299, Glu-315, Asn-342, and Asp-363. Cys-389 functions as the Nucleophile in the catalytic mechanism.

The protein belongs to the class I-like SAM-binding methyltransferase superfamily. RNA M5U methyltransferase family. RlmD subfamily.

The catalysed reaction is uridine(1939) in 23S rRNA + S-adenosyl-L-methionine = 5-methyluridine(1939) in 23S rRNA + S-adenosyl-L-homocysteine + H(+). In terms of biological role, catalyzes the formation of 5-methyl-uridine at position 1939 (m5U1939) in 23S rRNA. The chain is 23S rRNA (uracil(1939)-C(5))-methyltransferase RlmD from Escherichia coli (strain K12).